The following is a 455-amino-acid chain: MSLDIVILAAGQGTRMRSALPKVLHPVAGNSMLGHVIHSARQLQPQGIHVVIGHGAELVRERLAADDLNFVMQDKQLGTGHAVAQALPALTADTVLVLYGDVPLIEVETLQRLLAKANDQQLGLLTVTLDDPTGYGRIVRDEQGKVTAIVEHKDANDAQKAIKEGNTGILALPAARLADWMGRLSNNNAQGEYYLTDVIAMAVADGLVVATEQPHDAMEVQGANDRRQLSELERHYQLREGRRLMAQGVTLRDPARFDVRGEVSVGRDVLIDINVILEGKVVIEDDVQIGPNCVIKNTTLRKGAVVKANSHLEGAVMGEGSDAGPFARLRPGSVLDAKAHVGNFVELKNAHLGEGAKAGHLTYLGDAEIGARTNIGAGTITCNYDGANKFKTVMGEDVFIGSNNSLVAPVEIKAGATTAAGSTITQAVEAGDLAVARARQRNISGWKRPEKIKKS.

The interval M1–R226 is pyrophosphorylase. UDP-N-acetyl-alpha-D-glucosamine-binding positions include L8–G11, K22, Q73, G78–T79, Y99–D101, G136, E151, N166, and N224. D101 is a binding site for Mg(2+). Mg(2+) is bound at residue N224. The segment at R227 to Q247 is linker. The segment at G248 to S455 is N-acetyltransferase. Positions 330 and 348 each coordinate UDP-N-acetyl-alpha-D-glucosamine. Catalysis depends on H360, which acts as the Proton acceptor. Positions 363 and 374 each coordinate UDP-N-acetyl-alpha-D-glucosamine. Acetyl-CoA contacts are provided by residues A377, N383 to Y384, S402, A420, and R437.

In the N-terminal section; belongs to the N-acetylglucosamine-1-phosphate uridyltransferase family. It in the C-terminal section; belongs to the transferase hexapeptide repeat family. As to quaternary structure, homotrimer. Requires Mg(2+) as cofactor.

The protein localises to the cytoplasm. It carries out the reaction alpha-D-glucosamine 1-phosphate + acetyl-CoA = N-acetyl-alpha-D-glucosamine 1-phosphate + CoA + H(+). The catalysed reaction is N-acetyl-alpha-D-glucosamine 1-phosphate + UTP + H(+) = UDP-N-acetyl-alpha-D-glucosamine + diphosphate. The protein operates within nucleotide-sugar biosynthesis; UDP-N-acetyl-alpha-D-glucosamine biosynthesis; N-acetyl-alpha-D-glucosamine 1-phosphate from alpha-D-glucosamine 6-phosphate (route II): step 2/2. Its pathway is nucleotide-sugar biosynthesis; UDP-N-acetyl-alpha-D-glucosamine biosynthesis; UDP-N-acetyl-alpha-D-glucosamine from N-acetyl-alpha-D-glucosamine 1-phosphate: step 1/1. It participates in bacterial outer membrane biogenesis; LPS lipid A biosynthesis. Catalyzes the last two sequential reactions in the de novo biosynthetic pathway for UDP-N-acetylglucosamine (UDP-GlcNAc). The C-terminal domain catalyzes the transfer of acetyl group from acetyl coenzyme A to glucosamine-1-phosphate (GlcN-1-P) to produce N-acetylglucosamine-1-phosphate (GlcNAc-1-P), which is converted into UDP-GlcNAc by the transfer of uridine 5-monophosphate (from uridine 5-triphosphate), a reaction catalyzed by the N-terminal domain. The polypeptide is Bifunctional protein GlmU (Pseudomonas putida (strain ATCC 47054 / DSM 6125 / CFBP 8728 / NCIMB 11950 / KT2440)).